Reading from the N-terminus, the 220-residue chain is Thiamine-phosphate synthase (220 aa).

4-amino-2-methyl-5-(diphosphooxymethyl)pyrimidine-binding positions include 38-42 (QYRDK) and Asn-70. Mg(2+) contacts are provided by Asp-71 and Asp-90. Thr-109 serves as a coordination point for 4-amino-2-methyl-5-(diphosphooxymethyl)pyrimidine. A 2-[(2R,5Z)-2-carboxy-4-methylthiazol-5(2H)-ylidene]ethyl phosphate-binding site is contributed by 135–137 (TVS). Lys-138 is a binding site for 4-amino-2-methyl-5-(diphosphooxymethyl)pyrimidine. 2-[(2R,5Z)-2-carboxy-4-methylthiazol-5(2H)-ylidene]ethyl phosphate-binding positions include Gly-171 and 191-192 (IS).

It belongs to the thiamine-phosphate synthase family. Mg(2+) serves as cofactor.

It catalyses the reaction 2-[(2R,5Z)-2-carboxy-4-methylthiazol-5(2H)-ylidene]ethyl phosphate + 4-amino-2-methyl-5-(diphosphooxymethyl)pyrimidine + 2 H(+) = thiamine phosphate + CO2 + diphosphate. The enzyme catalyses 2-(2-carboxy-4-methylthiazol-5-yl)ethyl phosphate + 4-amino-2-methyl-5-(diphosphooxymethyl)pyrimidine + 2 H(+) = thiamine phosphate + CO2 + diphosphate. It carries out the reaction 4-methyl-5-(2-phosphooxyethyl)-thiazole + 4-amino-2-methyl-5-(diphosphooxymethyl)pyrimidine + H(+) = thiamine phosphate + diphosphate. The protein operates within cofactor biosynthesis; thiamine diphosphate biosynthesis; thiamine phosphate from 4-amino-2-methyl-5-diphosphomethylpyrimidine and 4-methyl-5-(2-phosphoethyl)-thiazole: step 1/1. Condenses 4-methyl-5-(beta-hydroxyethyl)thiazole monophosphate (THZ-P) and 2-methyl-4-amino-5-hydroxymethyl pyrimidine pyrophosphate (HMP-PP) to form thiamine monophosphate (TMP). In Agrobacterium fabrum (strain C58 / ATCC 33970) (Agrobacterium tumefaciens (strain C58)), this protein is Thiamine-phosphate synthase.